The primary structure comprises 97 residues: Co-chaperonin GroES (97 aa).

Belongs to the GroES chaperonin family. As to quaternary structure, heptamer of 7 subunits arranged in a ring. Interacts with the chaperonin GroEL.

The protein resides in the cytoplasm. Together with the chaperonin GroEL, plays an essential role in assisting protein folding. The GroEL-GroES system forms a nano-cage that allows encapsulation of the non-native substrate proteins and provides a physical environment optimized to promote and accelerate protein folding. GroES binds to the apical surface of the GroEL ring, thereby capping the opening of the GroEL channel. The chain is Co-chaperonin GroES from Pseudomonas fluorescens (strain ATCC BAA-477 / NRRL B-23932 / Pf-5).